The sequence spans 334 residues: L-lactate dehydrogenase B chain (334 aa).

Ala2 is subject to N-acetylalanine. The residue at position 7 (Lys7) is an N6-acetyllysine. Ser44 bears the Phosphoserine mark. Residues 53–58 (DVLEDK) and Arg100 contribute to the NAD(+) site. Lys58 bears the N6-acetyllysine mark. Arg107 provides a ligand contact to substrate. The residue at position 119 (Lys119) is an N6-acetyllysine. Asn139 is an NAD(+) binding site. Residues Asn139 and Arg170 each coordinate substrate. His194 acts as the Proton acceptor in catalysis. The residue at position 240 (Tyr240) is a Phosphotyrosine. Substrate is bound at residue Thr249. The residue at position 329 (Lys329) is an N6-acetyllysine.

Belongs to the LDH/MDH superfamily. LDH family. In terms of assembly, homotetramer. Interacts with PTEN upstream reading frame protein MP31; the interaction leads to inhibition of mitochondrial lactate dehydrogenase activity, preventing conversion of lactate to pyruvate in mitochondria.

Its subcellular location is the cytoplasm. It localises to the mitochondrion inner membrane. It carries out the reaction (S)-lactate + NAD(+) = pyruvate + NADH + H(+). The protein operates within fermentation; pyruvate fermentation to lactate; (S)-lactate from pyruvate: step 1/1. Interconverts simultaneously and stereospecifically pyruvate and lactate with concomitant interconversion of NADH and NAD(+). This chain is L-lactate dehydrogenase B chain (LDHB), found in Bos taurus (Bovine).